The following is a 587-amino-acid chain: L-ascorbate oxidase (587 aa).

An N-terminal signal peptide occupies residues 1–33 (MAKVADKPFFPKPFLSFLVLSIIFGFGITLSEA). Plastocyanin-like domains follow at residues 38–157 (IKHY…LIVD) and 169–335 (DEEI…NYLP). 3 disulfide bridges follow: Cys-54/Cys-236, Cys-116/Cys-574, and Cys-215/Cys-228. His-95, His-97, His-139, and His-141 together coordinate Cu cation. 3 N-linked (GlcNAc...) asparagine glycosylation sites follow: Asn-360, Asn-401, and Asn-475. A Plastocyanin-like 3 domain is found at 379-559 (NRRLFLLNTQ…HMGMGVVFAE (181 aa)). Residues His-480, His-483, His-485, His-542, Cys-543, His-544, His-548, and Met-553 each contribute to the Cu cation site.

Belongs to the multicopper oxidase family. In terms of assembly, dimer. Cu cation is required as a cofactor.

Its subcellular location is the secreted. It carries out the reaction 4 L-ascorbate + O2 = 4 monodehydro-L-ascorbate radical + 2 H2O. May be involved in a redox system involving ascorbic acid. The chain is L-ascorbate oxidase from Cucumis sativus (Cucumber).